Here is a 430-residue protein sequence, read N- to C-terminus: UPF0597 protein CV_1824 (430 aa).

It belongs to the UPF0597 family.

The protein is UPF0597 protein CV_1824 of Chromobacterium violaceum (strain ATCC 12472 / DSM 30191 / JCM 1249 / CCUG 213 / NBRC 12614 / NCIMB 9131 / NCTC 9757 / MK).